Consider the following 309-residue polypeptide: MVGFKATDVPPTATVKFLGAGTAACIADLITFPLDTAKVRLQIQGESQGLARTAASAQYRGVLGTILTMVRTEGPRSLYNGLVAGLQRQMSFASVRIGLYDSVKQFYTKGSEHAGIGSRLLAGSTTGALAVAVAQPTDVVKVRFQAQARAGGGRRYQSTVEAYKTIAREEGIRGLWKGTSPNVARNAIVNCTELVTYDLIKDTLLKANLMTDDLPCHFTSAFGAGFCTTVIASPVDVVKTRYMNSALGQYHSAGHCALTMLRKEGPRAFYKGFMPSFLRLGSWNVVMFVTYEQLKRALMAAYESREAPF.

Residues 1–16 lie on the Mitochondrial intermembrane side of the membrane; the sequence is MVGFKATDVPPTATVK. Solcar repeat units follow at residues 11 to 106, 114 to 203, and 212 to 297; these read PTAT…VKQF, AGIG…IKDT, and DDLP…LKRA. Positions 16-63 are important for interaction with long-chain fatty acids; the sequence is KFLGAGTAACIADLITFPLDTAKVRLQIQGESQGLARTAASAQYRGVL. The chain crosses the membrane as a helical span at residues 17-40; that stretch reads FLGAGTAACIADLITFPLDTAKVR. The Mitochondrial matrix portion of the chain corresponds to 41–77; the sequence is LQIQGESQGLARTAASAQYRGVLGTILTMVRTEGPRS. A helical membrane pass occupies residues 78–103; sequence LYNGLVAGLQRQMSFASVRIGLYDSV. The Mitochondrial intermembrane segment spans residues 104 to 119; the sequence is KQFYTKGSEHAGIGSR. The helical transmembrane segment at 120-145 threads the bilayer; the sequence is LLAGSTTGALAVAVAQPTDVVKVRFQ. Topologically, residues 146–173 are mitochondrial matrix; it reads AQARAGGGRRYQSTVEAYKTIAREEGIR. A helical membrane pass occupies residues 174–199; that stretch reads GLWKGTSPNVARNAIVNCTELVTYDL. The Mitochondrial intermembrane segment spans residues 200–217; that stretch reads IKDTLLKANLMTDDLPCH. A helical membrane pass occupies residues 218-242; sequence FTSAFGAGFCTTVIASPVDVVKTRY. Residues 243–268 are Mitochondrial matrix-facing; that stretch reads MNSALGQYHSAGHCALTMLRKEGPRA. Residues 269–294 form a helical membrane-spanning segment; that stretch reads FYKGFMPSFLRLGSWNVVMFVTYEQL. The tract at residues 278–285 is important for interaction with long-chain fatty acids; the sequence is LRLGSWNV. The Mitochondrial intermembrane portion of the chain corresponds to 295–309; sequence KRALMAAYESREAPF.

Belongs to the mitochondrial carrier (TC 2.A.29) family. In terms of assembly, homotetramer. Adopts an asymmetrical dimer of dimers functional form. Interacts with MICU1 (when methylated); leading to decrease the calcium sensitivity of MICU1. In terms of tissue distribution, expressed in a variety of organs, with predominant expression in the heart, lung and spleen.

The protein localises to the mitochondrion inner membrane. It catalyses the reaction L-aspartate(out) + phosphate(in) + H(+)(in) = L-aspartate(in) + phosphate(out) + H(+)(out). It carries out the reaction oxaloacetate(out) + phosphate(in) + H(+)(in) = oxaloacetate(in) + phosphate(out) + H(+)(out). The enzyme catalyses (S)-malate(out) + phosphate(in) + H(+)(in) = (S)-malate(in) + phosphate(out) + H(+)(out). The catalysed reaction is malonate(out) + phosphate(in) + H(+)(in) = malonate(in) + phosphate(out) + H(+)(out). It catalyses the reaction sulfate(out) + phosphate(in) + H(+)(in) = sulfate(in) + phosphate(out) + H(+)(out). It carries out the reaction (S)-malate(out) = (S)-malate(in). The enzyme catalyses L-aspartate(out) = L-aspartate(in). The catalysed reaction is phosphate(in) = phosphate(out). It catalyses the reaction chloride(in) = chloride(out). It carries out the reaction H(+)(in) = H(+)(out). The enzyme catalyses a long-chain fatty acid(out) = a long-chain fatty acid(in). In terms of biological role, antiporter that exports dicarboxylate intermediates of the Krebs cycle in exchange for phosphate plus a proton across the inner membrane of mitochondria, a process driven by mitochondrial motive force with an overall impact on glycolysis, glutaminolysis and glutathione-dependent redox balance. Continuous export of oxaloacetate and related four-carbon dicarboxylates from mitochondrial matrix into the cytosol negatively regulates the oxidation of acetyl-CoA substrates via the Krebs cycle lowering the ATP/ADP ratio and reactive oxygen species (ROS) production. May mediate inducible proton entry into the mitochondrial matrix affecting ATP turnover as a protection mechanism against oxidative stress. The proton currents are most likely associated with fatty acid flipping across the inner membrane of mitochondria in a metabolic process regulated by free fatty acids and purine nucleotides. Regulates the use of glucose as a source of energy. Required for glucose-induced DRP1-dependent mitochondrial fission and neuron activation in the ventromedial nucleus of the hypothalamus (VMH). This mitochondrial adaptation mechanism modulates the VMH pool of glucose-excited neurons with an impact on systemic glucose homeostasis. Regulates ROS levels and metabolic reprogramming of macrophages during the resolution phase of inflammation. Attenuates ROS production in response to IL33 to preserve the integrity of the Krebs cycle required for persistent production of itaconate and subsequent GATA3-dependent differentiation of inflammation-resolving alternatively activated macrophages. Can unidirectionally transport anions including L-malate, L-aspartate, phosphate and chloride ions. Does not mediate adaptive thermogenesis. The chain is Dicarboxylate carrier UCP2 (Ucp2) from Rattus norvegicus (Rat).